The primary structure comprises 214 residues: Large ribosomal subunit protein uL16 (214 aa).

Arg-32 carries the citrulline modification. Residue Lys-175 forms a Glycyl lysine isopeptide (Lys-Gly) (interchain with G-Cter in SUMO2) linkage. Lys-188 participates in a covalent cross-link: Glycyl lysine isopeptide (Lys-Gly) (interchain with G-Cter in ubiquitin).

This sequence belongs to the universal ribosomal protein uL16 family. Component of the large ribosomal subunit. Mature ribosomes consist of a small (40S) and a large (60S) subunit. The 40S subunit contains about 33 different proteins and 1 molecule of RNA (18S). The 60S subunit contains about 49 different proteins and 3 molecules of RNA (28S, 5.8S and 5S). Post-translationally, citrullinated by PADI4. Ufmylated by UFL1.

Its subcellular location is the cytoplasm. Its function is as follows. Component of the large ribosomal subunit. Plays a role in the formation of actively translating ribosomes. May play a role in the embryonic brain development. The polypeptide is Large ribosomal subunit protein uL16 (Bos taurus (Bovine)).